Here is a 331-residue protein sequence, read N- to C-terminus: Ribosomal RNA small subunit methyltransferase H (331 aa).

Residues 39-41, D56, F83, D100, and Q107 each bind S-adenosyl-L-methionine; that span reads GGY.

Belongs to the methyltransferase superfamily. RsmH family.

The protein resides in the cytoplasm. It catalyses the reaction cytidine(1402) in 16S rRNA + S-adenosyl-L-methionine = N(4)-methylcytidine(1402) in 16S rRNA + S-adenosyl-L-homocysteine + H(+). Functionally, specifically methylates the N4 position of cytidine in position 1402 (C1402) of 16S rRNA. This is Ribosomal RNA small subunit methyltransferase H from Bartonella bacilliformis (strain ATCC 35685 / KC583 / Herrer 020/F12,63).